The chain runs to 341 residues: MTKDILILAVETSCDETSVSFIKNGRDILSNTVLSQIESHKRFGGVVPEVASRHHVEGITTTINEALVDADVSIEDIDAIAVTEGPGLIGALLIGVNAAKALAFAYDKPLIPVHHIAGHIYANHIEEPLTFPLIALIVSGGHTELVYMKDHLSFEVIGETRDDAVGEAYDKVARTIGLNYPGGPQVDRLAAEGEDTYSFPRVWLDKDSYDFSFSGLKSAVINQLHNQRQKNIPIIEANVATSFQNSVVEVLTFKAIQACKEYGVQRLIVAGGVASNKGLRQSLADQCKVNDIQLTIPSPKLCTDNAAMIGVAGHYLYQQGRFADLALNGHSNIDLEEYSAE.

Positions 115 and 119 each coordinate Fe cation. Residues 137-141 (IVSGG), aspartate 170, glycine 183, aspartate 187, and asparagine 276 contribute to the substrate site. Residue aspartate 304 coordinates Fe cation.

Belongs to the KAE1 / TsaD family. Requires Fe(2+) as cofactor.

It is found in the cytoplasm. It carries out the reaction L-threonylcarbamoyladenylate + adenosine(37) in tRNA = N(6)-L-threonylcarbamoyladenosine(37) in tRNA + AMP + H(+). Required for the formation of a threonylcarbamoyl group on adenosine at position 37 (t(6)A37) in tRNAs that read codons beginning with adenine. Is involved in the transfer of the threonylcarbamoyl moiety of threonylcarbamoyl-AMP (TC-AMP) to the N6 group of A37, together with TsaE and TsaB. TsaD likely plays a direct catalytic role in this reaction. This is tRNA N6-adenosine threonylcarbamoyltransferase from Staphylococcus aureus (strain MSSA476).